The sequence spans 391 residues: Small ribosomal subunit protein bS1 (391 aa).

S1 motif domains follow at residues 16 to 90, 108 to 173, 194 to 262, and 279 to 348; these read GDKV…LSRR, NEII…LSRK, GDVI…LSIK, and NDDI…LSIK. The disordered stretch occupies residues 356–381; that stretch reads VVESDPSTTKAYLESEEEDNPTIGDM.

The protein belongs to the bacterial ribosomal protein bS1 family.

In terms of biological role, binds mRNA; thus facilitating recognition of the initiation point. It is needed to translate mRNA with a short Shine-Dalgarno (SD) purine-rich sequence. This is Small ribosomal subunit protein bS1 (rpsA) from Staphylococcus aureus (strain MRSA252).